A 205-amino-acid polypeptide reads, in one-letter code: Adenylyl-sulfate kinase (205 aa).

39–46 (GLSGAGKS) is an ATP binding site. Ser-113 (phosphoserine intermediate) is an active-site residue.

The protein belongs to the APS kinase family.

It carries out the reaction adenosine 5'-phosphosulfate + ATP = 3'-phosphoadenylyl sulfate + ADP + H(+). The protein operates within sulfur metabolism; hydrogen sulfide biosynthesis; sulfite from sulfate: step 2/3. Catalyzes the synthesis of activated sulfate. The chain is Adenylyl-sulfate kinase from Vibrio parahaemolyticus serotype O3:K6 (strain RIMD 2210633).